Reading from the N-terminus, the 191-residue chain is MSRCGSLGLYAPNALPSLSLKPRSVKSPFCITSHTKPNDTLLHNVNKMRAKACDILGAKKTILAAQLGAVLATIDHPALAITGVNNQQELSSVVLDIGIISVWYFLVMPPIIMNWLRVRWYRRKFFEMYLQFMFVFMFFPGLLLWAPFLNFRKFPRDPNMKNPWDKPTDPDSIKNVYLKYPYATPEDYDLD.

The N-terminal 46 residues, 1 to 46 (MSRCGSLGLYAPNALPSLSLKPRSVKSPFCITSHTKPNDTLLHNVN), are a transit peptide targeting the chloroplast. The next 3 membrane-spanning stretches (helical) occupy residues 61-81 (TILA…ALAI), 93-113 (VVLD…PIIM), and 129-149 (YLQF…APFL).

It belongs to the NDH complex subunit L family. As to quaternary structure, part of the chloroplast NDH complex, composed of a mixture of chloroplast and nucleus encoded subunits. Component of the NDH subcomplex A, at least composed of ndhH, ndhI, ndhJ, ndhK, ndhL, ndhM, ndhN and ndhO.

The protein resides in the plastid. It localises to the chloroplast thylakoid membrane. The enzyme catalyses a plastoquinone + NADH + (n+1) H(+)(in) = a plastoquinol + NAD(+) + n H(+)(out). It catalyses the reaction a plastoquinone + NADPH + (n+1) H(+)(in) = a plastoquinol + NADP(+) + n H(+)(out). NDH shuttles electrons from NAD(P)H:plastoquinone, via FMN and iron-sulfur (Fe-S) centers, to quinones in the photosynthetic chain and possibly in a chloroplast respiratory chain. The immediate electron acceptor for the enzyme in this species is believed to be plastoquinone. Couples the redox reaction to proton translocation, and thus conserves the redox energy in a proton gradient. The sequence is that of NAD(P)H-quinone oxidoreductase subunit L, chloroplastic from Arabidopsis thaliana (Mouse-ear cress).